Here is a 449-residue protein sequence, read N- to C-terminus: uncharacterized protein (449 aa).

The N-terminal stretch at 1–20 (MWTALVLIWIFSLSLSESHA) is a signal peptide. Residues 21–400 (ASNDPRNFVP…PLTQAVVDKT (380 aa)) are Extracellular-facing. The N-linked (GlcNAc...) asparagine glycan is linked to Asn-49. Disordered stretches follow at residues 72-101 (AHLN…AADG), 154-187 (MTAA…GHPS), and 215-381 (QTVA…PSTQ). 2 stretches are compositionally biased toward low complexity: residues 154 to 184 (MTAA…TATG) and 215 to 234 (QTVA…PSPS). 2 stretches are compositionally biased toward polar residues: residues 255–279 (GPIS…MPSN) and 352–367 (TPGT…SSGG). A helical transmembrane segment spans residues 401 to 421 (LLLVVLLLGVTLFITVLVLFA). The Cytoplasmic segment spans residues 422–449 (LQAYESYKKKDYTQVDYLINGMYADSEM).

As to expression, highest expression in heart, placenta, liver, pancreas and colon. Also detected in brain, lung, skeletal muscle, kidney, spleen, prostate, testis, ovary and small intestine. Lowest expression in thymus and leukocytes.

The protein localises to the cell membrane. It is found in the golgi apparatus. The protein resides in the trans-Golgi network membrane. This is an uncharacterized protein from Homo sapiens (Human).